Consider the following 259-residue polypeptide: uncharacterized protein (259 aa).

Disordered regions lie at residues 22 to 68 (GLQP…VSFG), 111 to 133 (REEQ…DEVE), and 181 to 202 (LGGK…KKKQ). The segment covering 50–63 (NEEEDAISDMEDKE) has biased composition (acidic residues). At Ser127 the chain carries Phosphoserine.

This is an uncharacterized protein from Schizosaccharomyces pombe (strain 972 / ATCC 24843) (Fission yeast).